A 336-amino-acid chain; its full sequence is tRNA-cytidine(32) 2-sulfurtransferase (336 aa).

The segment covering T11–P23 has biased composition (low complexity). The tract at residues T11–P31 is disordered. Positions S75–S80 match the PP-loop motif motif. 3 residues coordinate [4Fe-4S] cluster: C150, C153, and C241.

Belongs to the TtcA family. In terms of assembly, homodimer. Requires Mg(2+) as cofactor. [4Fe-4S] cluster is required as a cofactor.

Its subcellular location is the cytoplasm. The enzyme catalyses cytidine(32) in tRNA + S-sulfanyl-L-cysteinyl-[cysteine desulfurase] + AH2 + ATP = 2-thiocytidine(32) in tRNA + L-cysteinyl-[cysteine desulfurase] + A + AMP + diphosphate + H(+). Its pathway is tRNA modification. Catalyzes the ATP-dependent 2-thiolation of cytidine in position 32 of tRNA, to form 2-thiocytidine (s(2)C32). The sulfur atoms are provided by the cysteine/cysteine desulfurase (IscS) system. This Paraburkholderia xenovorans (strain LB400) protein is tRNA-cytidine(32) 2-sulfurtransferase.